The following is a 461-amino-acid chain: uncharacterized protein (461 aa).

Basic and acidic residues predominate over residues 1 to 19; it reads MEKCSHESGRHSAENDGKY. The segment at 1–21 is disordered; that stretch reads MEKCSHESGRHSAENDGKYDI.

The protein belongs to the CapA family.

Functionally, could be involved in the biosynthesis of a cell wall component. This is an uncharacterized protein from Sinorhizobium fredii (strain NBRC 101917 / NGR234).